A 1342-amino-acid chain; its full sequence is Cytokinesis protein sepH (1342 aa).

The span at Met-1–Glu-10 shows a compositional bias: low complexity. Residues Met-1 to Met-47 are disordered. A compositionally biased stretch (pro residues) spans Gly-11–Thr-22. Over residues Ser-36–Met-47 the composition is skewed to basic and acidic residues. A Protein kinase domain is found at Tyr-61–Ile-308. ATP-binding positions include Leu-67 to Val-75 and Lys-90. The active-site Proton acceptor is the Asp-180. 3 disordered regions span residues Asn-336–Asn-396, Ile-441–Glu-486, and Ala-552–Lys-591. A compositionally biased stretch (polar residues) spans Lys-369 to Asn-379. Residues Phe-658–Thr-695 are a coiled coil. Positions Ser-1201–Pro-1342 are disordered. Residues Gly-1207–Ser-1217 are compositionally biased toward basic residues. 2 stretches are compositionally biased toward polar residues: residues Thr-1218–Lys-1244 and Asp-1273–Ser-1290. A compositionally biased stretch (low complexity) spans Arg-1315–Gln-1324.

This sequence belongs to the protein kinase superfamily. Ser/Thr protein kinase family. CDC7 subfamily. Requires Mg(2+) as cofactor.

The catalysed reaction is L-seryl-[protein] + ATP = O-phospho-L-seryl-[protein] + ADP + H(+). The enzyme catalyses L-threonyl-[protein] + ATP = O-phospho-L-threonyl-[protein] + ADP + H(+). In terms of biological role, required for early events during cytokinesis including localization of cytoskeletal components to the cytokinetic ring. The sequence is that of Cytokinesis protein sepH from Aspergillus terreus (strain NIH 2624 / FGSC A1156).